The sequence spans 432 residues: D-amino acid dehydrogenase (432 aa).

3–17 contacts FAD; sequence VLVLGSGVVGTASAY.

The protein belongs to the DadA oxidoreductase family. It depends on FAD as a cofactor.

It catalyses the reaction a D-alpha-amino acid + A + H2O = a 2-oxocarboxylate + AH2 + NH4(+). The protein operates within amino-acid degradation; D-alanine degradation; NH(3) and pyruvate from D-alanine: step 1/1. Oxidative deamination of D-amino acids. The protein is D-amino acid dehydrogenase of Stutzerimonas stutzeri (strain A1501) (Pseudomonas stutzeri).